Reading from the N-terminus, the 119-residue chain is Dihydroneopterin aldolase (119 aa).

Substrate is bound by residues E21, Y53, and 72–73 (IE). K99 functions as the Proton donor/acceptor in the catalytic mechanism.

The protein belongs to the DHNA family.

The enzyme catalyses 7,8-dihydroneopterin = 6-hydroxymethyl-7,8-dihydropterin + glycolaldehyde. The protein operates within cofactor biosynthesis; tetrahydrofolate biosynthesis; 2-amino-4-hydroxy-6-hydroxymethyl-7,8-dihydropteridine diphosphate from 7,8-dihydroneopterin triphosphate: step 3/4. In terms of biological role, catalyzes the conversion of 7,8-dihydroneopterin to 6-hydroxymethyl-7,8-dihydropterin. This Streptococcus pyogenes serotype M6 (strain ATCC BAA-946 / MGAS10394) protein is Dihydroneopterin aldolase (folB).